A 336-amino-acid polypeptide reads, in one-letter code: Dihydroorotate dehydrogenase (quinone) (336 aa).

FMN-binding positions include Ala-62–Lys-66 and Thr-86. Lys-66 provides a ligand contact to substrate. Substrate is bound at residue Asn-111–Phe-115. 2 residues coordinate FMN: Asn-139 and Asn-172. Asn-172 is a substrate binding site. The active-site Nucleophile is Ser-175. Asn-177 contributes to the substrate binding site. Residues Lys-217 and Thr-245 each coordinate FMN. Position 246–247 (Asn-246–Thr-247) interacts with substrate. FMN-binding positions include Gly-268, Gly-297, and Tyr-318 to Ser-319.

This sequence belongs to the dihydroorotate dehydrogenase family. Type 2 subfamily. In terms of assembly, monomer. It depends on FMN as a cofactor.

It is found in the cell membrane. The catalysed reaction is (S)-dihydroorotate + a quinone = orotate + a quinol. The protein operates within pyrimidine metabolism; UMP biosynthesis via de novo pathway; orotate from (S)-dihydroorotate (quinone route): step 1/1. Catalyzes the conversion of dihydroorotate to orotate with quinone as electron acceptor. The protein is Dihydroorotate dehydrogenase (quinone) of Escherichia coli O17:K52:H18 (strain UMN026 / ExPEC).